The primary structure comprises 475 residues: Cobyric acid synthase (475 aa).

The GATase cobBQ-type domain occupies 244–431 (KLNVVVPVLT…LHGFFDEADV (188 aa)). The Nucleophile role is filled by C325. H423 is an active-site residue.

Belongs to the CobB/CobQ family. CobQ subfamily.

Its pathway is cofactor biosynthesis; adenosylcobalamin biosynthesis. Catalyzes amidations at positions B, D, E, and G on adenosylcobyrinic A,C-diamide. NH(2) groups are provided by glutamine, and one molecule of ATP is hydrogenolyzed for each amidation. This is Cobyric acid synthase from Vibrio campbellii (strain ATCC BAA-1116).